Reading from the N-terminus, the 456-residue chain is 5-hydroxytryptamine receptor 3E (456 aa).

A signal peptide spans 1 to 25 (MEGSWFHRKRFSFYLLLGFLLQGRG). The Extracellular portion of the chain corresponds to 26–248 (VTFTINCSGF…FYVAIRRRPS (223 aa)). Residues Cys162 and Cys176 are joined by a disulfide bond. Asn175 is a glycosylation site (N-linked (GlcNAc...) asparagine). Residues 249-269 (LYVINLLVPSGFLVAIDALSF) form a helical membrane-spanning segment. The Cytoplasmic segment spans residues 270–282 (YLPVKSGNRVPFK). A helical membrane pass occupies residues 283–303 (ITLLLGYNVFLLMMSDLLPTS). Residues 304 to 307 (GTPL) lie on the Extracellular side of the membrane. Residues 308-328 (IGVYFALCLSLMVGSLLETIF) traverse the membrane as a helical segment. At 329–433 (ITHLLHVATT…WLQFSHAMDA (105 aa)) the chain is on the cytoplasmic side. Positions 401 to 432 (TGGSEWTRAQREHEAQKQHSVELWLQFSHAMD) are HA-stretch; determines single-channel conductance in 5-HT3 receptors. The chain crosses the membrane as a helical span at residues 434–454 (MLFRLYLLFMASSIITVICLW). The Extracellular segment spans residues 455–456 (NT).

The protein belongs to the ligand-gated ion channel (TC 1.A.9) family. 5-hydroxytryptamine receptor (TC 1.A.9.2) subfamily. HTR3E sub-subfamily. In terms of assembly, forms homopentameric as well as heteropentameric serotonin-activated cation-selective channel complexes with HTR3A. The homomeric complex is not functional. Heteropentameric complexes display properties which resemble that of neuronal serotonin-activated channels in vivo. As to expression, expressed in adult colon and intestine.

The protein resides in the postsynaptic cell membrane. Its subcellular location is the cell membrane. The catalysed reaction is Na(+)(in) = Na(+)(out). It carries out the reaction K(+)(in) = K(+)(out). It catalyses the reaction Ca(2+)(in) = Ca(2+)(out). Functionally, forms serotonin (5-hydroxytryptamine/5-HT3)-activated cation-selective channel complexes, which when activated cause fast, depolarizing responses in neurons. In Homo sapiens (Human), this protein is 5-hydroxytryptamine receptor 3E.